A 1699-amino-acid polypeptide reads, in one-letter code: DNA polymerase (1699 aa).

2 DOD-type homing endonuclease domains span residues 770-903 (LLGY…SLGI) and 1222-1361 (LIGL…LVGV).

The protein belongs to the DNA polymerase type-B family. This protein undergoes a protein self splicing that involves a post-translational excision of the intervening region (intein) followed by peptide ligation.

The catalysed reaction is DNA(n) + a 2'-deoxyribonucleoside 5'-triphosphate = DNA(n+1) + diphosphate. Its function is as follows. In addition to polymerase activity, this DNA polymerase exhibits 3' to 5' exonuclease activity. PI-TspGE8I and PI-TspGE8II are endonucleases. This Thermococcus sp. (strain GE8) protein is DNA polymerase (pol).